Consider the following 182-residue polypeptide: Inner membrane assembly complex subunit 17 (182 aa).

The transit peptide at M1 to E45 directs the protein to the mitochondrion. Residues I46–P107 are Mitochondrial matrix-facing. A helical transmembrane segment spans residues L108–W127. Positions K128–T158 form a coiled coil. At K128–W182 the chain is on the mitochondrial intermembrane side.

The protein belongs to the INA17 family. In terms of assembly, component of the inner membrane assembly (INA) complex, composed of INA17 and INA22. Interacts with a subset of F(1)F(0)-ATP synthase subunits of the F(1)-domain and the peripheral stalk.

It localises to the mitochondrion inner membrane. Its function is as follows. Component of the INA complex (INAC) that promotes the biogenesis of mitochondrial F(1)F(0)-ATP synthase. INAC facilitates the assembly of the peripheral stalk and promotes the assembly of the catalytic F(1)-domain with the membrane-embedded F(0)-domain. In Saccharomyces cerevisiae (strain YJM789) (Baker's yeast), this protein is Inner membrane assembly complex subunit 17.